Here is a 229-residue protein sequence, read N- to C-terminus: Enolase-phosphatase E1 (229 aa).

The disordered stretch occupies residues 207–229; sequence RDPASHHPQVQRFDDIHPEQIPA. Basic and acidic residues predominate over residues 218–229; that stretch reads RFDDIHPEQIPA.

Belongs to the HAD-like hydrolase superfamily. MasA/MtnC family. As to quaternary structure, monomer. Mg(2+) serves as cofactor.

The catalysed reaction is 5-methylsulfanyl-2,3-dioxopentyl phosphate + H2O = 1,2-dihydroxy-5-(methylsulfanyl)pent-1-en-3-one + phosphate. It participates in amino-acid biosynthesis; L-methionine biosynthesis via salvage pathway; L-methionine from S-methyl-5-thio-alpha-D-ribose 1-phosphate: step 3/6. The protein operates within amino-acid biosynthesis; L-methionine biosynthesis via salvage pathway; L-methionine from S-methyl-5-thio-alpha-D-ribose 1-phosphate: step 4/6. Bifunctional enzyme that catalyzes the enolization of 2,3-diketo-5-methylthiopentyl-1-phosphate (DK-MTP-1-P) into the intermediate 2-hydroxy-3-keto-5-methylthiopentenyl-1-phosphate (HK-MTPenyl-1-P), which is then dephosphorylated to form the acireductone 1,2-dihydroxy-3-keto-5-methylthiopentene (DHK-MTPene). The protein is Enolase-phosphatase E1 of Klebsiella pneumoniae subsp. pneumoniae (strain ATCC 700721 / MGH 78578).